Consider the following 445-residue polypeptide: MIKIKRGLDLPISGAPEQRIEAARPVRSVALIGFDYHGMKPTMAVQVGDRVKLGQALFTDKKNPSVSYTAPGAGVVSAIHRGEKRVLQSVVIDLDGDEQLEFARYPADQLATLSAEQVRDNLLQSGLWTALRTRPFSKVPDPESSPSSIFVTAIDTQPLAADPQVVIAEQGEAFQAGLTVLGRLARVFLCKAEGVSLPGEALSGVTAQAFAGPHPAGLPGTHIHFLDPVGAGKSVWNLNYQDVIAIGKLFTTGQLWTERVIALAGPVVEKPRLVRTRLGANLDELAAGQLQPGNNRLISGSVLGGRTAHGAYAYLGRYHLQLSCLKEGDQREFLHYLRAGVEKHSLLNVFVSRLLGGKRFAFTTSTNGSPRAMVPVGNYEAVMPLDILPTQLLRYLIVGDTEMAQKLGALELDEEDLALCSYVCAGKYEYGPILRDNLARIEQEG.

This sequence belongs to the NqrA family. In terms of assembly, composed of six subunits; NqrA, NqrB, NqrC, NqrD, NqrE and NqrF.

It carries out the reaction a ubiquinone + n Na(+)(in) + NADH + H(+) = a ubiquinol + n Na(+)(out) + NAD(+). In terms of biological role, NQR complex catalyzes the reduction of ubiquinone-1 to ubiquinol by two successive reactions, coupled with the transport of Na(+) ions from the cytoplasm to the periplasm. NqrA to NqrE are probably involved in the second step, the conversion of ubisemiquinone to ubiquinol. The chain is Na(+)-translocating NADH-quinone reductase subunit A from Pseudomonas aeruginosa (strain UCBPP-PA14).